The primary structure comprises 134 residues: Methylglyoxal synthase (134 aa).

One can recognise an MGS-like domain in the interval 1-134; sequence MHIALIAHDE…DWRDLRRNDE (134 aa). Residues His8, Lys12, 34-37, and 54-55 each bind substrate; these read TGTT and SG. The Proton donor/acceptor role is filled by Asp60. His87 is a substrate binding site.

It belongs to the methylglyoxal synthase family.

The catalysed reaction is dihydroxyacetone phosphate = methylglyoxal + phosphate. Its function is as follows. Catalyzes the formation of methylglyoxal from dihydroxyacetone phosphate. The sequence is that of Methylglyoxal synthase from Listeria monocytogenes serotype 4b (strain CLIP80459).